The chain runs to 410 residues: Elongation factor Tu, chloroplastic (410 aa).

The tr-type G domain occupies 10–214 (KPHINIGTIG…QVDKYIPTPQ (205 aa)). The segment at 19–26 (GHVDHGKT) is G1. Position 19-26 (19-26 (GHVDHGKT)) interacts with GTP. A Mg(2+)-binding site is contributed by threonine 26. Positions 60 to 64 (GITIN) are G2. The tract at residues 81–84 (DCPG) is G3. GTP-binding positions include 81–85 (DCPGH) and 136–139 (NKED). The G4 stretch occupies residues 136 to 139 (NKED). Positions 174–176 (SAL) are G5.

This sequence belongs to the TRAFAC class translation factor GTPase superfamily. Classic translation factor GTPase family. EF-Tu/EF-1A subfamily.

It is found in the plastid. It localises to the chloroplast. The catalysed reaction is GTP + H2O = GDP + phosphate + H(+). Its function is as follows. GTP hydrolase that promotes the GTP-dependent binding of aminoacyl-tRNA to the A-site of ribosomes during protein biosynthesis. This is Elongation factor Tu, chloroplastic (tufA) from Mesostigma viride (Green alga).